The following is a 423-amino-acid chain: Kynureninase (423 aa).

Residues L105, S106, 133 to 136 (FPSD), D218, H221, and Y243 each bind pyridoxal 5'-phosphate. K244 carries the post-translational modification N6-(pyridoxal phosphate)lysine. 2 residues coordinate pyridoxal 5'-phosphate: W273 and N301.

The protein belongs to the kynureninase family. As to quaternary structure, homodimer. Pyridoxal 5'-phosphate is required as a cofactor.

It catalyses the reaction L-kynurenine + H2O = anthranilate + L-alanine + H(+). It carries out the reaction 3-hydroxy-L-kynurenine + H2O = 3-hydroxyanthranilate + L-alanine + H(+). It participates in amino-acid degradation; L-kynurenine degradation; L-alanine and anthranilate from L-kynurenine: step 1/1. It functions in the pathway cofactor biosynthesis; NAD(+) biosynthesis; quinolinate from L-kynurenine: step 2/3. Functionally, catalyzes the cleavage of L-kynurenine (L-Kyn) and L-3-hydroxykynurenine (L-3OHKyn) into anthranilic acid (AA) and 3-hydroxyanthranilic acid (3-OHAA), respectively. This chain is Kynureninase, found in Xanthomonas oryzae pv. oryzae (strain PXO99A).